The primary structure comprises 284 residues: 2-dehydro-3-deoxyphosphooctonate aldolase (284 aa).

This sequence belongs to the KdsA family.

It localises to the cytoplasm. The catalysed reaction is D-arabinose 5-phosphate + phosphoenolpyruvate + H2O = 3-deoxy-alpha-D-manno-2-octulosonate-8-phosphate + phosphate. Its pathway is carbohydrate biosynthesis; 3-deoxy-D-manno-octulosonate biosynthesis; 3-deoxy-D-manno-octulosonate from D-ribulose 5-phosphate: step 2/3. The protein operates within bacterial outer membrane biogenesis; lipopolysaccharide biosynthesis. The sequence is that of 2-dehydro-3-deoxyphosphooctonate aldolase from Proteus mirabilis (strain HI4320).